A 519-amino-acid chain; its full sequence is Bifunctional purine biosynthesis protein PurH (519 aa).

The MGS-like domain occupies 1–145; sequence MQPIQRALIS…KNHASVTVVV (145 aa).

The protein belongs to the PurH family.

It catalyses the reaction (6R)-10-formyltetrahydrofolate + 5-amino-1-(5-phospho-beta-D-ribosyl)imidazole-4-carboxamide = 5-formamido-1-(5-phospho-D-ribosyl)imidazole-4-carboxamide + (6S)-5,6,7,8-tetrahydrofolate. The enzyme catalyses IMP + H2O = 5-formamido-1-(5-phospho-D-ribosyl)imidazole-4-carboxamide. It participates in purine metabolism; IMP biosynthesis via de novo pathway; 5-formamido-1-(5-phospho-D-ribosyl)imidazole-4-carboxamide from 5-amino-1-(5-phospho-D-ribosyl)imidazole-4-carboxamide (10-formyl THF route): step 1/1. It functions in the pathway purine metabolism; IMP biosynthesis via de novo pathway; IMP from 5-formamido-1-(5-phospho-D-ribosyl)imidazole-4-carboxamide: step 1/1. This Allochromatium vinosum (strain ATCC 17899 / DSM 180 / NBRC 103801 / NCIMB 10441 / D) (Chromatium vinosum) protein is Bifunctional purine biosynthesis protein PurH.